Reading from the N-terminus, the 122-residue chain is Large ribosomal subunit protein uL14 (122 aa).

Belongs to the universal ribosomal protein uL14 family. Part of the 50S ribosomal subunit. Forms a cluster with proteins L3 and L19. In the 70S ribosome, L14 and L19 interact and together make contacts with the 16S rRNA in bridges B5 and B8.

Its function is as follows. Binds to 23S rRNA. Forms part of two intersubunit bridges in the 70S ribosome. This Caldicellulosiruptor bescii (strain ATCC BAA-1888 / DSM 6725 / KCTC 15123 / Z-1320) (Anaerocellum thermophilum) protein is Large ribosomal subunit protein uL14.